The primary structure comprises 439 residues: Phthalate 4,5-dioxygenase oxygenase subunit (439 aa).

The Rieske domain maps to 27-134 (WTPVCLLEEV…TREWGGFVWA (108 aa)). Cysteine 70, histidine 72, cysteine 89, and histidine 92 together coordinate [2Fe-2S] cluster. Fe cation is bound by residues histidine 181 and histidine 186.

This sequence belongs to the bacterial ring-hydroxylating dioxygenase alpha subunit family. This dioxygenase system consists of two proteins: phthalate oxygenase and phthalate oxygenase reductase. Requires [2Fe-2S] cluster as cofactor. Fe cation serves as cofactor.

The catalysed reaction is phthalate + NADH + O2 + H(+) = cis-4,5-dihydroxycyclohexa-2,6-diene-1,2-dicarboxylate + NAD(+). The protein operates within xenobiotic degradation; phthalate degradation; 3,4-dihydroxybenzoate from phthalate: step 1/3. In Pseudomonas putida (Arthrobacter siderocapsulatus), this protein is Phthalate 4,5-dioxygenase oxygenase subunit (pht3).